Here is a 143-residue protein sequence, read N- to C-terminus: Large ribosomal subunit protein uL11 (143 aa).

It belongs to the universal ribosomal protein uL11 family. As to quaternary structure, part of the ribosomal stalk of the 50S ribosomal subunit. Interacts with L10 and the large rRNA to form the base of the stalk. L10 forms an elongated spine to which L12 dimers bind in a sequential fashion forming a multimeric L10(L12)X complex. In terms of processing, one or more lysine residues are methylated.

Forms part of the ribosomal stalk which helps the ribosome interact with GTP-bound translation factors. The chain is Large ribosomal subunit protein uL11 from Salinispora tropica (strain ATCC BAA-916 / DSM 44818 / JCM 13857 / NBRC 105044 / CNB-440).